The primary structure comprises 750 residues: Photosystem I P700 chlorophyll a apoprotein A1 (750 aa).

The next 8 helical transmembrane spans lie at 70-93 (VFSA…FHGA), 156-179 (LYCT…FHYH), 195-219 (LNHH…HVSL), 291-309 (IAHH…GHMY), 346-369 (WHAQ…HHMY), 385-411 (LSLF…IFMV), 433-455 (AIIS…LYIH), and 531-549 (FLVH…LILL). Residues cysteine 573 and cysteine 582 each contribute to the [4Fe-4S] cluster site. 2 consecutive transmembrane segments (helical) span residues 589–610 (HVFL…HFSW) and 664–686 (LSAY…MFLF). Histidine 675 contributes to the chlorophyll a' binding site. Methionine 683 and tyrosine 691 together coordinate chlorophyll a. Position 692 (tryptophan 692) interacts with phylloquinone. A helical transmembrane segment spans residues 724 to 744 (AVGVTHYLLGGIATTWAFFLA).

Belongs to the PsaA/PsaB family. In terms of assembly, the PsaA/B heterodimer binds the P700 chlorophyll special pair and subsequent electron acceptors. PSI consists of a core antenna complex that captures photons, and an electron transfer chain that converts photonic excitation into a charge separation. The eukaryotic PSI reaction center is composed of at least 11 subunits. The cofactor is P700 is a chlorophyll a/chlorophyll a' dimer, A0 is one or more chlorophyll a, A1 is one or both phylloquinones and FX is a shared 4Fe-4S iron-sulfur center..

The protein resides in the plastid. It localises to the chloroplast thylakoid membrane. The enzyme catalyses reduced [plastocyanin] + hnu + oxidized [2Fe-2S]-[ferredoxin] = oxidized [plastocyanin] + reduced [2Fe-2S]-[ferredoxin]. PsaA and PsaB bind P700, the primary electron donor of photosystem I (PSI), as well as the electron acceptors A0, A1 and FX. PSI is a plastocyanin-ferredoxin oxidoreductase, converting photonic excitation into a charge separation, which transfers an electron from the donor P700 chlorophyll pair to the spectroscopically characterized acceptors A0, A1, FX, FA and FB in turn. Oxidized P700 is reduced on the lumenal side of the thylakoid membrane by plastocyanin. The polypeptide is Photosystem I P700 chlorophyll a apoprotein A1 (Triticum aestivum (Wheat)).